Here is a 352-residue protein sequence, read N- to C-terminus: Thiosulfate transporter TsuA (352 aa).

Residues 1–21 (MFSMILSGLICGALLGFVMQR) traverse the membrane as a helical segment. Residues 22 to 44 (GRFCLTGGFRDMYIVKNNRMFYA) are Cytoplasmic-facing. A helical transmembrane segment spans residues 45 to 65 (LLIAISVQSVGVFALIQAGLL). The Periplasmic portion of the chain corresponds to 66 to 70 (TYEAG). Residues 71–91 (AFPWLGTVIGGYIFGLGIVLA) form a helical membrane-spanning segment. Residues 92–102 (GGCATGTWYRA) lie on the Cytoplasmic side of the membrane. Residues 103–123 (GEGLIGSWIALFTYMVMSAVM) form a helical membrane-spanning segment. Over 124-148 (RSPHASGLNQTLQHYSTEHNSIAET) the chain is Periplasmic. The chain crosses the membrane as a helical span at residues 149–169 (FNLSVWPLVAVLLVITLWVVM). The Cytoplasmic segment spans residues 170–197 (KELKKPKLKVATLPPRRTGIAHILFEKR). The helical transmembrane segment at 198 to 218 (WHPFVTAVLIGLIALLAWPLS) threads the bilayer. Topologically, residues 219–247 (EATGRMFGLGITSPTANILQFLVAGDMKY) are periplasmic. The chain crosses the membrane as a helical span at residues 248–268 (INWGVFLVLGIFVGSFIAAKA). The Cytoplasmic segment spans residues 269 to 289 (SREFRVRAADAQTTLRSGLGG). A helical transmembrane segment spans residues 290–310 (VLMGFGASIAGGCSIGNGLVM). Topologically, residues 311–317 (TAMMTWQ) are periplasmic. The helical transmembrane segment at 318–338 (GWIGLVFMILGVWTASWLVYV) threads the bilayer. Residues 339–352 (RPQRKARLATAAAN) lie on the Cytoplasmic side of the membrane.

The protein belongs to the TsuA/YedE (TC 9.B.102) family.

The protein localises to the cell inner membrane. It carries out the reaction thiosulfate(in) = thiosulfate(out). In terms of biological role, mediates thiosulfate uptake. In Escherichia coli (strain K12), this protein is Thiosulfate transporter TsuA.